A 280-amino-acid chain; its full sequence is Putative ABC transporter ATP-binding protein MTH_133 (280 aa).

One can recognise an ABC transporter domain in the interval 6–241 (IEAVDIRYTY…IDTIRGANLR (236 aa)). Residue 39–46 (GPNGAGKS) participates in ATP binding.

It belongs to the ABC transporter superfamily.

The protein localises to the cell membrane. In terms of biological role, probably part of an ABC transporter complex. Responsible for energy coupling to the transport system. The polypeptide is Putative ABC transporter ATP-binding protein MTH_133 (Methanothermobacter thermautotrophicus (strain ATCC 29096 / DSM 1053 / JCM 10044 / NBRC 100330 / Delta H) (Methanobacterium thermoautotrophicum)).